The sequence spans 1036 residues: MRNTTKLVVHVVDAQYLMPRDGQGSASPFVEVDFLNQLSKTRTVPKSLNPVWNQKLYFDYDQSVINQHNQHIEVSVYHERRPIPGRSFLGRVKISLCNIVYKDDQVYQRFTLEKKWLLSSVKGEIGLKFYISSSEEDQTFPLPSKPYTSPTQASASGTEEDTADSETEDSLKSFASAEEEDLADSVSECVEGKKSEEVKEPVQKLHRQEVFARPAPMQSIRLRSRENPHEAQKPMSRGANQLHPQNPNHLQSYGDTDLDDFKVKDMNLDLGERWPNPNAGERFTGTYDLVEQMFYLYVRVVKAKELPPGSITGGCDPYVEVKLGNYKGRTKIFDRKTTIPEWNQVFAFTKERIQSSVLEVFVKDKETLGRDDILGKVVFDLNEIPTRVPPNSPLAPQWYRLEDWRGEGKVVRGEIMLAVWMGTQADEAFPEAWHADSASVHGEGVFNIRSKVYVSPKLWYLRVNVIEAQDMIPSDRNRLPDVFVKASVGMQTLKTSICSIKTTNPLWKEDLVFVVAEPFEEQLVISVEDRVHTSKDEVIGKITLPMNVFEKRLDHRPVHSRWFNLDKYGTGVLEPDARRKEHKFSSRIHLRICLEGGYHVMDESTMYISDTRPTARQLWKQPVGMLEIGILGANGLVPMKLKDGRGSTNAYCVAKYGQKWVRTRTILDTLSPRWNEQYTWEVYDPCTVITLGVFDNSHLGSAQSGTADSRDARIGKVRIRLSTLEAHKIYTHSFPLLVLQPHGLKKTGDLQISVRFTTLSLANIIYNYGHPLLPKMHYLFPFTVNQVDGLRYQAMNIVSTRLGRAEPPLRKEVVEYMLDVDSHLWSMRRSKANFFRIMSLLSGYFLVGKWLEDVCNWRYPVTSVLVNVLFFILVMYPELILPTMFLYMFFIGLWNFRSRPRHPPHMDMKLSWAEAVGPDELDEEFDTFPTSRSQELVRLRYDRLRSVAGRIQTVVGDIAAQGERIQSLLSWRDPRATSLFILFCLAASVVLYAMPFKAIALASGLYYLRHPKFRSKLPSLPSNFFKRLPSSTDSLL.

Residues 1-110 enclose the C2 1 domain; the sequence is MRNTTKLVVH…YKDDQVYQRF (110 aa). Disordered stretches follow at residues 137-204 and 225-246; these read DQTF…PVQK and RENP…HPQN. Polar residues predominate over residues 146 to 155; it reads PYTSPTQASA. Residues 158 to 168 are compositionally biased toward acidic residues; sequence TEEDTADSETE. Residues 190-204 show a composition bias toward basic and acidic residues; it reads VEGKKSEEVKEPVQK. C2 domains follow at residues 277–399, 440–563, and 607–734; these read PNAG…PQWY, VHGE…SRWF, and YISD…THSF. Residues Asp-316, Asp-364, Glu-366, and Asp-372 each contribute to the Ca(2+) site. 2 helical membrane passes run 871–891 and 979–999; these read FILV…MFFI and LFIL…FKAI.

Belongs to the MCTP family. Requires Ca(2+) as cofactor. Expressed in the vascular tissues of roots and rosette leaves. Accumulates in roots meristems. Observed in flowers.

It is found in the cell membrane. May function as a signaling molecule by regulating the trafficking of other regulators. This is Multiple C2 domain and transmembrane region protein 2 from Arabidopsis thaliana (Mouse-ear cress).